The following is a 446-amino-acid chain: MTNMTQASATEKKGAGDLLRFKIFGMPLPLYAFALITLLLSHFYNAIPTDLVGGFALMFVMGAIFGEIGKRLPIFNKYIGGAPVMIFLVAAYFVYAGIFTQKEIDAISNVMDKSNFLNLFIAVLITGAILSVNRKLLLKSLLGYIPTILAGIVGASLFGIVIGLCFGIPVDRIMMLYVLPIMGGGNGAGAVPLSEIYHSVTGRSREEYYSTAIAILTIANIFAIIFAALLDMIGKKYTWLSGEGELVRKASFKTEDDEKAGQITHRETAVGMVLSTTCFLLAYVVAKKILPSIGGVSIHYFAWMVLIVAALNASGLCSPEIKAGAKRLSDFFSKQLLWVLMVGVGVCYTDLQEIIDALTFANVVIAAIIVVGAVVGAAIGGWLIGFYPIESSITAGLCMANRGGSGDLEVLSACNRMNLISYAQISSRLGGGIVLVIASIVFSMMV.

The next 5 membrane-spanning stretches (helical) occupy residues 23-43 (IFGM…LSHF), 46-66 (AIPT…AIFG), 79-99 (IGGA…AGIF), 110-130 (VMDK…GAIL), and 148-168 (ILAG…CFGI). Residues isoleucine 181 and glycine 183 each contribute to the Na(+) site. Citrate is bound by residues asparagine 186 and glycine 187. Helical transmembrane passes span 213–233 (IAIL…LDMI), 267–287 (ETAV…VVAK), 289–309 (ILPS…LIVA), 335–355 (QLLW…QEII), and 364–384 (VIAA…GWLI). The Na(+) site is built by methionine 399 and asparagine 401. Citrate contacts are provided by arginine 402, glycine 404, serine 405, and arginine 428. The chain crosses the membrane as a helical span at residues 425 to 445 (ISSRLGGGIVLVIASIVFSMM).

Belongs to the 2-hydroxycarboxylate transporter (2-HCT) (TC 2.A.24) family. As to quaternary structure, homodimer.

Its subcellular location is the cell inner membrane. It carries out the reaction citrate(out) + 2 Na(+)(out) = citrate(in) + 2 Na(+)(in). In terms of biological role, secondary active transporter that catalyzes the uptake of citrate across the membrane with the concomitant uptake of sodium. Is specific for citrate. The chain is Citrate/sodium symporter from Salmonella dublin.